Consider the following 207-residue polypeptide: Dephospho-CoA kinase (207 aa).

The region spanning 4 to 203 is the DPCK domain; the sequence is VIGLTGGIAS…EEGYIEKPNY (200 aa). ATP is bound at residue 12–17; that stretch reads ASGKST.

This sequence belongs to the CoaE family.

Its subcellular location is the cytoplasm. It carries out the reaction 3'-dephospho-CoA + ATP = ADP + CoA + H(+). It functions in the pathway cofactor biosynthesis; coenzyme A biosynthesis; CoA from (R)-pantothenate: step 5/5. Functionally, catalyzes the phosphorylation of the 3'-hydroxyl group of dephosphocoenzyme A to form coenzyme A. This chain is Dephospho-CoA kinase, found in Staphylococcus aureus (strain bovine RF122 / ET3-1).